The sequence spans 189 residues: Small ribosomal subunit protein uS5 (189 aa).

One can recognise an S5 DRBM domain in the interval 22 to 85 (FVDKLVAINR…ESAKRDLIFV (64 aa)).

This sequence belongs to the universal ribosomal protein uS5 family. In terms of assembly, part of the 30S ribosomal subunit. Contacts proteins S4 and S8.

With S4 and S12 plays an important role in translational accuracy. In terms of biological role, located at the back of the 30S subunit body where it stabilizes the conformation of the head with respect to the body. This is Small ribosomal subunit protein uS5 from Allorhizobium ampelinum (strain ATCC BAA-846 / DSM 112012 / S4) (Agrobacterium vitis (strain S4)).